The primary structure comprises 331 residues: UPF0324 membrane protein SAR0338 (331 aa).

11 helical membrane passes run 9 to 26, 31 to 48, 69 to 88, 93 to 115, 122 to 144, 154 to 176, 183 to 202, 217 to 234, 247 to 269, 273 to 295, and 308 to 330; these read FMIG…SFLA, ILDK…AILY, LLRF…DIIG, LLAI…NKLL, ALLL…APIF, SIGI…YAIF, YGAW…LAGG, LGRV…ILIM, ISIP…VTIP, LNIL…GLNV, and LMTI…HWLY.

Belongs to the UPF0324 family.

The protein resides in the cell membrane. The protein is UPF0324 membrane protein SAR0338 of Staphylococcus aureus (strain MRSA252).